A 365-amino-acid chain; its full sequence is Succinyl-diaminopimelate desuccinylase (365 aa).

His65 provides a ligand contact to Zn(2+). Asp67 is a catalytic residue. Asp96 lines the Zn(2+) pocket. Glu126 functions as the Proton acceptor in the catalytic mechanism. Residues Glu127, Glu155, and His340 each coordinate Zn(2+).

Belongs to the peptidase M20A family. DapE subfamily. As to quaternary structure, homodimer. Zn(2+) serves as cofactor. It depends on Co(2+) as a cofactor.

The catalysed reaction is N-succinyl-(2S,6S)-2,6-diaminopimelate + H2O = (2S,6S)-2,6-diaminopimelate + succinate. Its pathway is amino-acid biosynthesis; L-lysine biosynthesis via DAP pathway; LL-2,6-diaminopimelate from (S)-tetrahydrodipicolinate (succinylase route): step 3/3. In terms of biological role, catalyzes the hydrolysis of N-succinyl-L,L-diaminopimelic acid (SDAP), forming succinate and LL-2,6-diaminopimelate (DAP), an intermediate involved in the bacterial biosynthesis of lysine and meso-diaminopimelic acid, an essential component of bacterial cell walls. The sequence is that of Succinyl-diaminopimelate desuccinylase from Campylobacter jejuni subsp. jejuni serotype O:23/36 (strain 81-176).